The primary structure comprises 264 residues: MSNSNIHTTAIIAEGAKFGKNVKVGPYCIIGPEVVLHDNVELKSHVVIDGITEIGENTVIYPFASIGQPPQILKYANERSSTIIGSNNTIREYVTVQAGSKSGGMITRVGNNNLFMVGVHIGHDCKIGNNLVFANYVSLAGHIKVGDYAIIGGLSAVHQYTRIGEYSMIGGLSPVSADVIPFGLVSSKRAVLEGLNLIGMNRKGFDKVDSLTALNAVEEIFLGKGNFADRIKQVAEKYKNNSIVTQIIDFLNQDSSRSFCHFKK.

It belongs to the transferase hexapeptide repeat family. LpxA subfamily. In terms of assembly, homotrimer.

Its subcellular location is the cytoplasm. It catalyses the reaction a (3R)-hydroxyacyl-[ACP] + UDP-N-acetyl-alpha-D-glucosamine = a UDP-3-O-[(3R)-3-hydroxyacyl]-N-acetyl-alpha-D-glucosamine + holo-[ACP]. It functions in the pathway glycolipid biosynthesis; lipid IV(A) biosynthesis; lipid IV(A) from (3R)-3-hydroxytetradecanoyl-[acyl-carrier-protein] and UDP-N-acetyl-alpha-D-glucosamine: step 1/6. Functionally, involved in the biosynthesis of lipid A, a phosphorylated glycolipid that anchors the lipopolysaccharide to the outer membrane of the cell. In Rickettsia typhi (strain ATCC VR-144 / Wilmington), this protein is Acyl-[acyl-carrier-protein]--UDP-N-acetylglucosamine O-acyltransferase.